The primary structure comprises 106 residues: Small ribosomal subunit protein bS20 (106 aa).

Residues 1–32 (MAQKKPKRNLSALKRHRQSLKRRLRNKAKKSA) are disordered.

In terms of assembly, part of the 30S ribosomal subunit.

Its function is as follows. One of the primary rRNA binding proteins, it binds directly to 16S rRNA where it nucleates assembly of the bottom of the body of the 30S subunit, by binding to several RNA helices of the 16S rRNA. The protein is Small ribosomal subunit protein bS20 (rpsT) of Thermus thermophilus (strain ATCC 27634 / DSM 579 / HB8).